The chain runs to 352 residues: Endoplasmic reticulum GDP-fucose transporter (352 aa).

10 helical membrane-spanning segments follow: residues 9–29 (LGML…ELII), 34–54 (GAGN…GLVF), 70–90 (YVIL…AFNF), 96–116 (LHMI…IVLL), 126–146 (SSVA…SGDV), 163–183 (FFWW…TAYM), 201–221 (ALFF…GNIV), 249–271 (LMLF…VYVL), 276–298 (ASLT…SIIY), and 305–325 (LNHW…ANVI). The Prevents secretion from ER signature appears at 350–352 (KVE).

Belongs to the nucleotide-sugar transporter family. SLC35B subfamily.

The protein resides in the endoplasmic reticulum membrane. Its function is as follows. Sugar transporter that specifically mediates the transport of UDP-N-acetylglucosamine (UDP-GlcNAc), GDP-fucose and UDP-xylose. Functions redundantly with Gfr in the O-fucosylation of Notch, positively regulating Notch signaling. Involved in the biosynthesis of heparan sulfate-glycosaminoglycan (HS-GAG) and in Dpp signaling in the wing imaginal disk. This Drosophila melanogaster (Fruit fly) protein is Endoplasmic reticulum GDP-fucose transporter.